We begin with the raw amino-acid sequence, 62 residues long: Photosystem II reaction center protein Z (62 aa).

Helical transmembrane passes span 8-28 (ALFA…VAFA) and 41-61 (FSGA…NSFI).

The protein belongs to the PsbZ family. As to quaternary structure, PSII is composed of 1 copy each of membrane proteins PsbA, PsbB, PsbC, PsbD, PsbE, PsbF, PsbH, PsbI, PsbJ, PsbK, PsbL, PsbM, PsbT, PsbY, PsbZ, Psb30/Ycf12, at least 3 peripheral proteins of the oxygen-evolving complex and a large number of cofactors. It forms dimeric complexes.

Its subcellular location is the plastid. It is found in the chloroplast thylakoid membrane. Functionally, may control the interaction of photosystem II (PSII) cores with the light-harvesting antenna, regulates electron flow through the 2 photosystem reaction centers. PSII is a light-driven water plastoquinone oxidoreductase, using light energy to abstract electrons from H(2)O, generating a proton gradient subsequently used for ATP formation. The polypeptide is Photosystem II reaction center protein Z (Adiantum capillus-veneris (Maidenhair fern)).